Here is a 535-residue protein sequence, read N- to C-terminus: Thermosome subunit gamma (535 aa).

The protein belongs to the TCP-1 chaperonin family. Forms a Heterooligomeric complex of two stacked eight-membered rings.

In terms of biological role, molecular chaperone; binds unfolded polypeptides in vitro, and has a weak ATPase activity. This Saccharolobus solfataricus (strain ATCC 35092 / DSM 1617 / JCM 11322 / P2) (Sulfolobus solfataricus) protein is Thermosome subunit gamma (thsC).